We begin with the raw amino-acid sequence, 313 residues long: 3'-5' exoribonuclease YhaM (313 aa).

Residues histidine 163–serine 279 enclose the HD domain.

Belongs to the YhaM family.

Functionally, shows a 3'-5' exoribonuclease activity. This Listeria monocytogenes serotype 4b (strain CLIP80459) protein is 3'-5' exoribonuclease YhaM.